The primary structure comprises 550 residues: ATP synthase subunit alpha (550 aa).

172-179 (GDRKTGKT) lines the ATP pocket. The segment at 521–550 (EPAAEPLAGEEDRETVTRFHDDATDRPAGS) is disordered. Residues 534–550 (ETVTRFHDDATDRPAGS) show a composition bias toward basic and acidic residues.

This sequence belongs to the ATPase alpha/beta chains family. As to quaternary structure, F-type ATPases have 2 components, CF(1) - the catalytic core - and CF(0) - the membrane proton channel. CF(1) has five subunits: alpha(3), beta(3), gamma(1), delta(1), epsilon(1). CF(0) has three main subunits: a(1), b(2) and c(9-12). The alpha and beta chains form an alternating ring which encloses part of the gamma chain. CF(1) is attached to CF(0) by a central stalk formed by the gamma and epsilon chains, while a peripheral stalk is formed by the delta and b chains.

It is found in the cell membrane. It catalyses the reaction ATP + H2O + 4 H(+)(in) = ADP + phosphate + 5 H(+)(out). Functionally, produces ATP from ADP in the presence of a proton gradient across the membrane. The alpha chain is a regulatory subunit. This chain is ATP synthase subunit alpha, found in Salinispora tropica (strain ATCC BAA-916 / DSM 44818 / JCM 13857 / NBRC 105044 / CNB-440).